A 134-amino-acid polypeptide reads, in one-letter code: RxLR effector protein Avh238 (134 aa).

A signal peptide spans 1 to 21; the sequence is MRGVFFVAVAVAIFARSSAEA. Residues 44-68 carry the RxLR-dEER motif; it reads RFLRVADSEDDDLAAPADDGKTEER. The tract at residues 50 to 72 is disordered; it reads DSEDDDLAAPADDGKTEERAPKF. Basic and acidic residues predominate over residues 61–70; it reads DDGKTEERAP.

This sequence belongs to the RxLR effector family.

Its subcellular location is the secreted. It is found in the host cytoplasm. It localises to the host nucleus. In terms of biological role, effector that, due to the lack of a histidine residue at position 79, is not able to induce cell death in tomato, tobacco, eggplant, potato, or in A.thaliana. The protein is RxLR effector protein Avh238 of Phytophthora sojae (Soybean stem and root rot agent).